An 833-amino-acid chain; its full sequence is MVPSRRTWNLGATPSLRGLWRVGRAPEPEPGMARPAPAPASPAARPFPHTGPGRLRTGRGKDTPVCGDEDSSARSAARPALAQCRALSVDWAGPGSPHGLYLTLQVEHLKEKLISQAQEVSRLRSELGGTDLEKHRDLLMVENERLRQEMRRCEAELQELRTKPAGPCPGCEHSQESAQLRDKLSQLQLEMAESKGMLSELNLEVQQKTDRLAEVELRLKDCLAEKAQEEERLSRRLRDSHETIASLRAQSPPVKYVIKTVEVESSKTKQALSESQARNQHLQEQVAMQRQVLKEMEQQLQSSHQLTARLRAQIAMYESELERAHGQMLEEMQSLEEDKNRAIEEAFARAQVEMKAVHENLAGVRTNLLTLQPALRTLTNDYNGLKRQVRGFPLLLQEALRSVKAEIGQAIEEVNSNNQELLRKYRRELQLRKKCHNELVRLKGNIRVIARVRPVTKEDGEGPEATNAVTFDADDDSIIHLLHKGKPVSFELDKVFSPQASQQDVFQEVQALVTSCIDGFNVCIFAYGQTGAGKTYTMEGTAENPGINQRALQLLFSEVQEKASDWEYTITVSAAEIYNEVLRDLLGKEPQEKLEIRLCPDGSGQLYVPGLTEFQVQSVDDINKVFEFGHTNRTTEFTNLNEHSSRSHALLIVTVRGVDCSTGLRTTGKLNLVDLAGSERVGKSGAEGSRLREAQHINKSLSALGDVIAALRSRQGHVPFRNSKLTYLLQDSLSGDSKTLMVVQVSPVEKNTSETLYSLKFAERVRSVELGPGLRRAELGSWSSQEHLEWEPACQTPQPSARAHSAPSSGTSSRPGSIRRKLQPSGKSRPLPV.

A disordered region spans residues 19-74 (LWRVGRAPEPEPGMARPAPAPASPAARPFPHTGPGRLRTGRGKDTPVCGDEDSSAR). Positions 30–48 (PGMARPAPAPASPAARPFP) are enriched in low complexity. Coiled-coil stretches lie at residues 102-362 (LTLQ…ENLA) and 395-432 (LLQE…LQLR). Residues 445-768 (NIRVIARVRP…LKFAERVRSV (324 aa)) form the Kinesin motor domain. 528–535 (GQTGAGKT) contacts ATP. Residues 786–833 (EHLEWEPACQTPQPSARAHSAPSSGTSSRPGSIRRKLQPSGKSRPLPV) are disordered. Positions 806–815 (APSSGTSSRP) are enriched in polar residues. 2 positions are modified to phosphoserine: serine 813 and serine 817.

Belongs to the TRAFAC class myosin-kinesin ATPase superfamily. Kinesin family.

The protein localises to the cell junction. It is found in the adherens junction. The protein resides in the cytoplasm. It localises to the cytoskeleton. Its subcellular location is the microtubule organizing center. The protein localises to the centrosome. It is found in the cytoplasmic vesicle membrane. Its function is as follows. Minus-end microtubule-dependent motor protein. Involved in apically targeted transport. Required for zonula adherens maintenance. The chain is Kinesin-like protein KIFC3 (KIFC3) from Homo sapiens (Human).